A 578-amino-acid polypeptide reads, in one-letter code: SCARECROW-LIKE protein 7 (578 aa).

A compositionally biased stretch (low complexity) spans V18–Q29. 2 disordered regions span residues V18–G84 and P146–P173. The segment covering P49–Q61 has biased composition (basic residues). Positions Q62 to H74 are enriched in low complexity. Over residues P146–T156 the composition is skewed to pro residues. Residues H157–P173 show a composition bias toward low complexity. Residues S198 to R578 form the GRAS domain. Residues A205–A264 form a leucine repeat I (LRI) region. The tract at residues Y283–G349 is VHIID. The VHIID signature appears at I314–D318. Residues A365–D397 form a leucine repeat II (LRII) region. A PFYRE region spans residues V406–R497. The LXXLL motif motif lies at L414–L418. The SAW stretch occupies residues G500–R578.

It belongs to the GRAS family. Homodimer.

It localises to the nucleus. Its function is as follows. Probable transcription factor involved in plant development. Involved in environmental abiotic stress resistance. May increase the expression of stress-responsive genes. Binds DNA in vitro. This chain is SCARECROW-LIKE protein 7, found in Oryza sativa subsp. japonica (Rice).